A 2242-amino-acid chain; its full sequence is Transcription factor sma-9 (2242 aa).

Positions 120 to 383 (HQLAQQQAQQ…QQAQQAQLAQ (264 aa)) form a coiled coil. The span at 317-330 (AAQQAQAQNNASQQ) shows a compositional bias: low complexity. Disordered stretches follow at residues 317–344 (AAQQ…SSTP), 494–553 (TPVA…SMSD), 583–617 (GAQS…SRSQ), 712–754 (LAAH…SSFP), and 1323–1349 (EDST…SPPL). The span at 331 to 344 (RPSVASTPALSSTP) shows a compositional bias: polar residues. Low complexity-rich tracts occupy residues 494 to 523 (TPVA…ATSS) and 539 to 550 (SSSKAASSGNES). Positions 583–601 (GAQSSVDHDSNSGGSTRTS) are enriched in polar residues. The span at 1324–1338 (DSTSAEPSTSGQSLL) shows a compositional bias: polar residues. C2H2-type zinc fingers lie at residues 1447–1469 (YICD…IKSH), 1475–1499 (FNCT…SKTH), 1700–1722 (LKCD…QHTH), 1734–1760 (YQCS…HGVH), and 1790–1814 (FMCV…SKTH). Over residues 2029–2039 (SITSPIVSSST) the composition is skewed to low complexity. 2 disordered regions span residues 2029 to 2059 (SITS…PTHT) and 2085 to 2107 (STDK…PRPI). Residues 2085–2099 (STDKAHASESLSDRL) are compositionally biased toward basic and acidic residues. C2H2-type zinc fingers lie at residues 2111–2134 (TKCQ…HVDH) and 2143–2167 (YKCP…VTAH). The segment at 2219-2242 (HELYAQTQQGAGSSTSNQSPKAAN) is disordered. The span at 2223 to 2242 (AQTQQGAGSSTSNQSPKAAN) shows a compositional bias: polar residues.

In terms of tissue distribution, expressed in the ventral nerve cord (VNC), pharynx, intestine and seam cells (at protein level).

Its subcellular location is the nucleus. Its function is as follows. Transcription factor, probably acting as a transcriptional activator and repressor, involved in the TGF-beta-like dbl-1 signaling pathway. Plays a role in regulation of body size, and patterning of male-specific genital sensilla (simple sense organs), known as rays, and mating-associated structures, spicules. Required for the dorsoventral patterning of the postembryonic mesodermal lineage (M lineage), acting by antagonizing the TGF-beta-like dbl-1 signaling pathway, in part by repressing expression of transcription factor unc-130. Involved in egg-laying, perhaps via modulation of cholinergic neurotransmission. Involved in production of reactive oxygen species (ROS), acting downstream of the dbl-1 signaling pathway. Plays a role in the mitochondrial unfolded protein response (mtUPR). May play a role in modulating lifespan and in responses to proteotoxic stress. Functionally, transcription factor, probably acting as a transcriptional activator. Required for patterning of male-specific genital sensilla (simple sense organs), known as rays. Dispensable for regulation of body size. This Caenorhabditis elegans protein is Transcription factor sma-9.